A 478-amino-acid polypeptide reads, in one-letter code: Glycogen synthase (478 aa).

Lysine 15 contacts ADP-alpha-D-glucose.

This sequence belongs to the glycosyltransferase 1 family. Bacterial/plant glycogen synthase subfamily.

It carries out the reaction [(1-&gt;4)-alpha-D-glucosyl](n) + ADP-alpha-D-glucose = [(1-&gt;4)-alpha-D-glucosyl](n+1) + ADP + H(+). It participates in glycan biosynthesis; glycogen biosynthesis. In terms of biological role, synthesizes alpha-1,4-glucan chains using ADP-glucose. The polypeptide is Glycogen synthase (Streptococcus uberis (strain ATCC BAA-854 / 0140J)).